The chain runs to 673 residues: DNA ligase (673 aa).

NAD(+) contacts are provided by residues 34-38 (DAEYD), 83-84 (SL), and glutamate 116. Lysine 118 (N6-AMP-lysine intermediate) is an active-site residue. Positions 139, 176, 293, and 317 each coordinate NAD(+). Zn(2+) contacts are provided by cysteine 411, cysteine 414, cysteine 429, and cysteine 435. Residues 595-673 (NQQNPFFGKT…EDEFLKWVNS (79 aa)) enclose the BRCT domain.

It belongs to the NAD-dependent DNA ligase family. LigA subfamily. It depends on Mg(2+) as a cofactor. Mn(2+) is required as a cofactor.

It catalyses the reaction NAD(+) + (deoxyribonucleotide)n-3'-hydroxyl + 5'-phospho-(deoxyribonucleotide)m = (deoxyribonucleotide)n+m + AMP + beta-nicotinamide D-nucleotide.. Functionally, DNA ligase that catalyzes the formation of phosphodiester linkages between 5'-phosphoryl and 3'-hydroxyl groups in double-stranded DNA using NAD as a coenzyme and as the energy source for the reaction. It is essential for DNA replication and repair of damaged DNA. This is DNA ligase from Legionella pneumophila subsp. pneumophila (strain Philadelphia 1 / ATCC 33152 / DSM 7513).